The sequence spans 386 residues: 23S rRNA (uracil(747)-C(5))-methyltransferase RlmC (386 aa).

4 residues coordinate [4Fe-4S] cluster: cysteine 7, cysteine 15, cysteine 18, and cysteine 94. Residues glutamine 219, phenylalanine 248, glutamate 269, and asparagine 316 each coordinate S-adenosyl-L-methionine. Catalysis depends on cysteine 343, which acts as the Nucleophile.

It belongs to the class I-like SAM-binding methyltransferase superfamily. RNA M5U methyltransferase family. RlmC subfamily.

The enzyme catalyses uridine(747) in 23S rRNA + S-adenosyl-L-methionine = 5-methyluridine(747) in 23S rRNA + S-adenosyl-L-homocysteine + H(+). In terms of biological role, catalyzes the formation of 5-methyl-uridine at position 747 (m5U747) in 23S rRNA. The sequence is that of 23S rRNA (uracil(747)-C(5))-methyltransferase RlmC from Shewanella oneidensis (strain ATCC 700550 / JCM 31522 / CIP 106686 / LMG 19005 / NCIMB 14063 / MR-1).